The following is a 332-amino-acid chain: DNA-directed RNA polymerase subunit alpha (332 aa).

Positions 1–244 are alpha N-terminal domain (alpha-NTD); sequence MKKHAKVYYS…AHLNLLADVE (244 aa). Positions 259–332 are alpha C-terminal domain (alpha-CTD); that stretch reads IKEEPIRRFS…NYKNENKGEN (74 aa).

This sequence belongs to the RNA polymerase alpha chain family. As to quaternary structure, homodimer. The RNAP catalytic core consists of 2 alpha, 1 beta, 1 beta' and 1 omega subunit. When a sigma factor is associated with the core the holoenzyme is formed, which can initiate transcription.

It catalyses the reaction RNA(n) + a ribonucleoside 5'-triphosphate = RNA(n+1) + diphosphate. In terms of biological role, DNA-dependent RNA polymerase catalyzes the transcription of DNA into RNA using the four ribonucleoside triphosphates as substrates. The polypeptide is DNA-directed RNA polymerase subunit alpha (Mesomycoplasma hyopneumoniae (strain 7448) (Mycoplasma hyopneumoniae)).